The following is a 218-amino-acid chain: GTP cyclohydrolase 1 (218 aa).

Zn(2+)-binding residues include Cys109, His112, and Cys180.

Belongs to the GTP cyclohydrolase I family. In terms of assembly, toroid-shaped homodecamer, composed of two pentamers of five dimers.

The catalysed reaction is GTP + H2O = 7,8-dihydroneopterin 3'-triphosphate + formate + H(+). It functions in the pathway cofactor biosynthesis; 7,8-dihydroneopterin triphosphate biosynthesis; 7,8-dihydroneopterin triphosphate from GTP: step 1/1. The sequence is that of GTP cyclohydrolase 1 from Actinobacillus pleuropneumoniae serotype 5b (strain L20).